The following is a 76-amino-acid chain: Conotoxin MaIr332 (76 aa).

The signal sequence occupies residues 1 to 21 (MKLTCVIVAVLFLTAWTFVTA). Residues 22–48 (DDSGNGLENLFSKAHHEMKNPKDSKLN) constitute a propeptide that is removed on maturation. 3 disulfide bridges follow: Cys-51–Cys-66, Cys-58–Cys-70, and Cys-65–Cys-75.

This sequence belongs to the conotoxin O1 superfamily. Expressed by the venom duct.

The protein resides in the secreted. This Conus marmoreus (Marble cone) protein is Conotoxin MaIr332.